The sequence spans 178 residues: 5,6,7,8-tetrahydromethanopterin hydro-lyase (178 aa).

Residue His33 is the Proton donor of the active site. Residues Asp35, Leu64, Lys82, Thr84, and Gln99 each contribute to the substrate site.

The protein belongs to the formaldehyde-activating enzyme family.

It is found in the cytoplasm. The catalysed reaction is 5,6,7,8-tetrahydromethanopterin + formaldehyde = 5,10-methylenetetrahydromethanopterin + H2O. Catalyzes the condensation of formaldehyde with tetrahydromethanopterin (H(4)MPT) to 5,10-methylenetetrahydromethanopterin. The chain is 5,6,7,8-tetrahydromethanopterin hydro-lyase (faeA) from Methanosarcina barkeri (strain Fusaro / DSM 804).